A 298-amino-acid chain; its full sequence is Probable deoxyhypusine synthase 2 (298 aa).

The active-site Nucleophile is the Lys-259.

It belongs to the deoxyhypusine synthase family. NAD(+) serves as cofactor.

It carries out the reaction [eIF5A protein]-L-lysine + spermidine = [eIF5A protein]-deoxyhypusine + propane-1,3-diamine. It participates in protein modification; eIF5A hypusination. Its function is as follows. Catalyzes the NAD-dependent oxidative cleavage of spermidine and the subsequent transfer of the butylamine moiety of spermidine to the epsilon-amino group of a specific lysine residue of the eIF-5A precursor protein to form the intermediate deoxyhypusine residue. In Archaeoglobus fulgidus (strain ATCC 49558 / DSM 4304 / JCM 9628 / NBRC 100126 / VC-16), this protein is Probable deoxyhypusine synthase 2 (dys2).